A 341-amino-acid chain; its full sequence is Biotin synthase (341 aa).

The region spanning 40 to 267 (AEIQVSTLLS…RSMVRLSAGR (228 aa)) is the Radical SAM core domain. Residues Cys55, Cys59, and Cys62 each contribute to the [4Fe-4S] cluster site. Residues Cys99, Cys130, Cys190, and Arg262 each contribute to the [2Fe-2S] cluster site.

The protein belongs to the radical SAM superfamily. Biotin synthase family. As to quaternary structure, homodimer. The cofactor is [4Fe-4S] cluster. [2Fe-2S] cluster serves as cofactor.

The enzyme catalyses (4R,5S)-dethiobiotin + (sulfur carrier)-SH + 2 reduced [2Fe-2S]-[ferredoxin] + 2 S-adenosyl-L-methionine = (sulfur carrier)-H + biotin + 2 5'-deoxyadenosine + 2 L-methionine + 2 oxidized [2Fe-2S]-[ferredoxin]. It functions in the pathway cofactor biosynthesis; biotin biosynthesis; biotin from 7,8-diaminononanoate: step 2/2. Catalyzes the conversion of dethiobiotin (DTB) to biotin by the insertion of a sulfur atom into dethiobiotin via a radical-based mechanism. The protein is Biotin synthase of Xylella fastidiosa (strain M23).